The chain runs to 75 residues: Rugosin-LK2 (75 aa).

An N-terminal signal peptide occupies residues 1–24 (MFTMKKSLLFLFFLGTISLSFCEG). Positions 25-40 (ERSADEDDEGEMTEEE) are excised as a propeptide.

As to expression, expressed by the skin glands.

It is found in the secreted. Functionally, has antimicrobial activity against Gram-positive bacteria S.aureus ATCC 2592 (MIC=10.0 uM), S.aureus ATCC 43300 (MIC=10.0 uM) and B.subtilis (MIC=30.0 uM), against Gram-negative bacteria E.coli ML-35P (MIC=10.0 uM), P.aeruginosa PA01 (MIC=2.5 uM) and P.aeruginosa ATCC 27853 (MIC=2.5 uM) and against fungus C.albicans ATCC 2002 (MIC=10.0 uM). The protein is Rugosin-LK2 of Limnonectes kuhlii (Kuhl's Creek frog).